We begin with the raw amino-acid sequence, 95 residues long: Aspartyl/glutamyl-tRNA(Asn/Gln) amidotransferase subunit C (95 aa).

Belongs to the GatC family. Heterotrimer of A, B and C subunits.

It catalyses the reaction L-glutamyl-tRNA(Gln) + L-glutamine + ATP + H2O = L-glutaminyl-tRNA(Gln) + L-glutamate + ADP + phosphate + H(+). The enzyme catalyses L-aspartyl-tRNA(Asn) + L-glutamine + ATP + H2O = L-asparaginyl-tRNA(Asn) + L-glutamate + ADP + phosphate + 2 H(+). Functionally, allows the formation of correctly charged Asn-tRNA(Asn) or Gln-tRNA(Gln) through the transamidation of misacylated Asp-tRNA(Asn) or Glu-tRNA(Gln) in organisms which lack either or both of asparaginyl-tRNA or glutaminyl-tRNA synthetases. The reaction takes place in the presence of glutamine and ATP through an activated phospho-Asp-tRNA(Asn) or phospho-Glu-tRNA(Gln). The sequence is that of Aspartyl/glutamyl-tRNA(Asn/Gln) amidotransferase subunit C from Pseudomonas entomophila (strain L48).